The sequence spans 373 residues: MPLINLPDFANDLIAEFVERNAERIDTPVIQPAEPFLDIAGEDLRRRIFMTESETGASLCLRPEFTIPVCLRHIETATGTPKRYAYLGEVFRQRRDGANEFYQAGIEDLGDIDLSNADARAIGDATGILARLLPGRHLAVTLGDQAVFEAVVQALGLPLGWQKRLIHAFGNMTQLEALLASLVSPQFVTGLDDDIARLVASGDEQALVAHLEREMQKTGYSTNAGRSALEIARRLKEKLILSETRLDDAAFHVLEEFLSLDVPLVNASAALSGFADAAGLKLGNALSRFNGRVAALSNAGVDLSCLDYRAAFGRPLDYYTGLVFEVTVEGSTAVLAGGGRFDRLLTFLGATDRIPAVGFSFWLDRIETERAAA.

The protein belongs to the class-II aminoacyl-tRNA synthetase family. HisZ subfamily. As to quaternary structure, heteromultimer composed of HisG and HisZ subunits.

Its subcellular location is the cytoplasm. It functions in the pathway amino-acid biosynthesis; L-histidine biosynthesis; L-histidine from 5-phospho-alpha-D-ribose 1-diphosphate: step 1/9. Its function is as follows. Required for the first step of histidine biosynthesis. May allow the feedback regulation of ATP phosphoribosyltransferase activity by histidine. The chain is ATP phosphoribosyltransferase regulatory subunit from Rhizobium johnstonii (strain DSM 114642 / LMG 32736 / 3841) (Rhizobium leguminosarum bv. viciae).